We begin with the raw amino-acid sequence, 159 residues long: UPF0303 protein Ping_1243 (159 aa).

This sequence belongs to the UPF0303 family.

The protein is UPF0303 protein Ping_1243 of Psychromonas ingrahamii (strain DSM 17664 / CCUG 51855 / 37).